We begin with the raw amino-acid sequence, 776 residues long: 5-methyltetrahydropteroyltriglutamate--homocysteine methyltransferase (776 aa).

5-methyltetrahydropteroyltri-L-glutamate is bound by residues 13 to 16 (RELK) and Lys127. L-homocysteine-binding positions include 450 to 452 (IGS) and Glu503. Residues 450 to 452 (IGS) and Glu503 each bind L-methionine. Residue Trp580 coordinates 5-methyltetrahydropteroyltri-L-glutamate. Asp618 contributes to the L-homocysteine binding site. Residue Asp618 coordinates L-methionine. Glu624 lines the 5-methyltetrahydropteroyltri-L-glutamate pocket. His660, Cys662, and Glu684 together coordinate Zn(2+). The active-site Proton donor is the His713. Cys745 serves as a coordination point for Zn(2+).

It belongs to the vitamin-B12 independent methionine synthase family. The cofactor is Zn(2+).

It catalyses the reaction 5-methyltetrahydropteroyltri-L-glutamate + L-homocysteine = tetrahydropteroyltri-L-glutamate + L-methionine. Its pathway is amino-acid biosynthesis; L-methionine biosynthesis via de novo pathway; L-methionine from L-homocysteine (MetE route): step 1/1. Catalyzes the transfer of a methyl group from 5-methyltetrahydrofolate to homocysteine resulting in methionine formation. The polypeptide is 5-methyltetrahydropteroyltriglutamate--homocysteine methyltransferase (Mesorhizobium japonicum (strain LMG 29417 / CECT 9101 / MAFF 303099) (Mesorhizobium loti (strain MAFF 303099))).